Here is a 250-residue protein sequence, read N- to C-terminus: Phosphonates import ATP-binding protein PhnC (250 aa).

The ABC transporter domain maps to 2–247; that stretch reads IVFNNVNKVW…KLDAQAMKKI (246 aa). 35–42 is an ATP binding site; that stretch reads GLSGAGKT.

This sequence belongs to the ABC transporter superfamily. Phosphonates importer (TC 3.A.1.9.1) family. In terms of assembly, the complex is composed of two ATP-binding proteins (PhnC), two transmembrane proteins (PhnE) and a solute-binding protein (PhnD).

It localises to the cell membrane. The enzyme catalyses phosphonate(out) + ATP + H2O = phosphonate(in) + ADP + phosphate + H(+). In terms of biological role, part of the ABC transporter complex PhnCDE involved in phosphonates import. Responsible for energy coupling to the transport system. The sequence is that of Phosphonates import ATP-binding protein PhnC from Mycoplasma mycoides subsp. mycoides SC (strain CCUG 32753 / NCTC 10114 / PG1).